The primary structure comprises 186 residues: ADP-ribosylation factor-like protein 6 (186 aa).

Gly2 is lipidated: N-myristoyl glycine. Residues Gly24–Thr31, Thr50, Asp69–Gln73, Gly72, Asn130–Asp133, and Ala164 contribute to the GTP site. Residues Thr31 and Thr50 each coordinate Mg(2+).

Belongs to the small GTPase superfamily. Arf family. Interacts with SEC61B, ARL6IP1, ARL6IP2, ARL6IP3, ARL6IP4 ARL6IP5 and ARL6IP6. Interacts (GTP-bound form) with the BBSome a complex that contains BBS1, BBS2, BBS4, BBS5, BBS7, BBS8/TTC8, BBS9 and BBIP10. Interacts (GTP-free form) with IFT27.

The protein resides in the cell projection. Its subcellular location is the cilium membrane. It is found in the cytoplasm. The protein localises to the cytoskeleton. It localises to the cilium axoneme. The protein resides in the cilium basal body. Involved in membrane protein trafficking at the base of the ciliary organelle. Mediates recruitment onto plasma membrane of the BBSome complex which would constitute a coat complex required for sorting of specific membrane proteins to the primary cilia. Together with BBS1, is necessary for correct trafficking of PKD1 to primary cilia. Together with the BBSome complex and LTZL1, controls SMO ciliary trafficking and contributes to the sonic hedgehog (SHH) pathway regulation. May regulate cilia assembly and disassembly and subsequent ciliary signaling events such as the Wnt signaling cascade. Isoform 2 may be required for proper retinal function and organization. This is ADP-ribosylation factor-like protein 6 (ARL6) from Homo sapiens (Human).